A 183-amino-acid chain; its full sequence is Peptide deformylase (183 aa).

Residues Cys111 and His154 each coordinate Fe cation. The active site involves Glu155. Residue His158 participates in Fe cation binding.

Belongs to the polypeptide deformylase family. Requires Fe(2+) as cofactor.

It catalyses the reaction N-terminal N-formyl-L-methionyl-[peptide] + H2O = N-terminal L-methionyl-[peptide] + formate. Its function is as follows. Removes the formyl group from the N-terminal Met of newly synthesized proteins. Requires at least a dipeptide for an efficient rate of reaction. N-terminal L-methionine is a prerequisite for activity but the enzyme has broad specificity at other positions. The chain is Peptide deformylase from Staphylococcus aureus (strain COL).